The primary structure comprises 535 residues: Probable lipid II flippase MurJ (535 aa).

12 consecutive transmembrane segments (helical) span residues 90-110, 131-151, 159-179, 192-212, 233-253, 274-294, 316-336, 350-370, 388-408, 413-433, 451-471, and 484-504; these read VLFTVLLLLTIAMELSMPFIV, FATIMFPYLACMSLAAMMAGM, FAAAIAPVFLNFILIAVLAYA, DLSWGVLAAGLVQLAIVWVAV, LLVLALPAAITGGITQINLLI, IYQLPLGVVGIAVATVLLPEL, FTLFLTLPAAAALLVMSEPIV, TVVVGHILAIYGLGLPAFVLI, IFAGISVAVNVSLALTLFPSL, IATAEIVAGWVNALLLFATLV, LVIAAAIMAAALYVAVDWLAF, and LTLCGLIAAAMAIYFAVAFGI.

The protein belongs to the MurJ/MviN family.

Its subcellular location is the cell inner membrane. It participates in cell wall biogenesis; peptidoglycan biosynthesis. Its function is as follows. Involved in peptidoglycan biosynthesis. Transports lipid-linked peptidoglycan precursors from the inner to the outer leaflet of the cytoplasmic membrane. The sequence is that of Probable lipid II flippase MurJ from Rhizobium meliloti (strain 1021) (Ensifer meliloti).